We begin with the raw amino-acid sequence, 332 residues long: Putative pumilio homolog 20 (332 aa).

Residues 1–332 (MAHQLRFAAA…NIASILNSIR (332 aa)) form the PUM-HD domain. 2 Pumilio repeats span residues 89–124 (SDPD…FAAA) and 125–159 (ILRR…AMYE). Residues 160 to 191 (HILHYASHIARDKHGNLALNDIITDAYRNKLF) form a Pumilio 3; degenerate repeat. Pumilio repeat units lie at residues 192 to 228 (DVIA…NIVV), 229 to 266 (SLRG…ELME), and 267 to 303 (CEGD…DLFW).

The protein resides in the cytoplasm. Sequence-specific RNA-binding protein that regulates translation and mRNA stability by binding the 3'-UTR of target mRNAs. The protein is Putative pumilio homolog 20 (APUM20) of Arabidopsis thaliana (Mouse-ear cress).